We begin with the raw amino-acid sequence, 509 residues long: Maturase K (509 aa).

Belongs to the intron maturase 2 family. MatK subfamily.

It localises to the plastid. It is found in the chloroplast. Functionally, usually encoded in the trnK tRNA gene intron. Probably assists in splicing its own and other chloroplast group II introns. In Schlumbergera truncata (Thanksgiving cactus), this protein is Maturase K.